Consider the following 231-residue polypeptide: MRFDVISVIPYFFDSVLTSGLLNIARKKGEVEIYIHNLHDYGLGRYKQVDDAPYGGGAGMVIRPEPVFACIEALQAERHYDAVIFLTPDGELLEQPLANRLSRLENLLLLCGHYKAIDERIREQLITMEISVGDVVLSGGEIPALMLMDAIVRLIPGVLGDSESALTDSFQNGLLDAAYYTRPADFRGMKVPEVLLSGHQAHIEQWRTASALERTKIRRPDLLERAWREEF.

An S-adenosyl-L-methionine-binding site is contributed by G112.

The protein belongs to the RNA methyltransferase TrmD family. As to quaternary structure, homodimer.

The protein localises to the cytoplasm. It catalyses the reaction guanosine(37) in tRNA + S-adenosyl-L-methionine = N(1)-methylguanosine(37) in tRNA + S-adenosyl-L-homocysteine + H(+). Functionally, specifically methylates guanosine-37 in various tRNAs. This chain is tRNA (guanine-N(1)-)-methyltransferase, found in Chlorobium chlorochromatii (strain CaD3).